We begin with the raw amino-acid sequence, 761 residues long: Xaa-Pro dipeptidyl-peptidase (761 aa).

Active-site charge relay system residues include serine 347, aspartate 467, and histidine 497.

It belongs to the peptidase S15 family. As to quaternary structure, homodimer.

Its subcellular location is the cytoplasm. The enzyme catalyses Hydrolyzes Xaa-Pro-|- bonds to release unblocked, N-terminal dipeptides from substrates including Ala-Pro-|-p-nitroanilide and (sequentially) Tyr-Pro-|-Phe-Pro-|-Gly-Pro-|-Ile.. Functionally, removes N-terminal dipeptides sequentially from polypeptides having unsubstituted N-termini provided that the penultimate residue is proline. The chain is Xaa-Pro dipeptidyl-peptidase from Streptococcus agalactiae serotype Ia (strain ATCC 27591 / A909 / CDC SS700).